A 304-amino-acid chain; its full sequence is MAIKHFLQFSDLTLDEFEYVIERTRIIKRKFKNYEPHHPLVDRTLVMVFEKNSTRTRLSFEAGMHQLGGAAIHLATRDSQLGRGEPVEDAAQVMSRMCDIIMIRTFGQDIIERFAANSRVPVINGLTNEHHPCQVLADVFTFIEHRGSIKGKTVAWIGDANNMLYSWLQAAQVFDFHVNVSTPKGYEIDPTLVAADNTHYKLYAAPSDACAGAHLVTTDVWTSMGFEEENAARLKAFDGWIVDAAKMKRAQPDALFMHCLPAHRGEEVAAEVIDGPQSVVWDEAENRLHAQKALLEYLVLGKLS.

Residues 53-56, Q80, R104, and 131-134 contribute to the carbamoyl phosphate site; these read STRT and HPCQ. Residues N162, D219, and 223-224 contribute to the L-ornithine site; that span reads SM. Carbamoyl phosphate is bound by residues 259-260 and R287; that span reads CL.

The protein belongs to the aspartate/ornithine carbamoyltransferase superfamily. OTCase family.

It is found in the cytoplasm. The enzyme catalyses carbamoyl phosphate + L-ornithine = L-citrulline + phosphate + H(+). Its pathway is amino-acid biosynthesis; L-arginine biosynthesis; L-arginine from L-ornithine and carbamoyl phosphate: step 1/3. Its function is as follows. Reversibly catalyzes the transfer of the carbamoyl group from carbamoyl phosphate (CP) to the N(epsilon) atom of ornithine (ORN) to produce L-citrulline. This is Ornithine carbamoyltransferase from Herminiimonas arsenicoxydans.